The following is a 368-amino-acid chain: Protein-glutamate methylesterase/protein-glutamine glutaminase (368 aa).

Residues 9–126 (KVLVVDDSAF…SINMKELKDE (118 aa)) enclose the Response regulatory domain. D60 is subject to 4-aspartylphosphate. In terms of domain architecture, CheB-type methylesterase spans 161 to 354 (SVPARIAVAI…ETVVKAVEII (194 aa)). Catalysis depends on residues S173, H200, and D296.

The protein belongs to the CheB family. Post-translationally, phosphorylated by CheA. Phosphorylation of the N-terminal regulatory domain activates the methylesterase activity.

The protein resides in the cytoplasm. It carries out the reaction [protein]-L-glutamate 5-O-methyl ester + H2O = L-glutamyl-[protein] + methanol + H(+). It catalyses the reaction L-glutaminyl-[protein] + H2O = L-glutamyl-[protein] + NH4(+). In terms of biological role, involved in chemotaxis. Part of a chemotaxis signal transduction system that modulates chemotaxis in response to various stimuli. Catalyzes the demethylation of specific methylglutamate residues introduced into the chemoreceptors (methyl-accepting chemotaxis proteins or MCP) by CheR. Also mediates the irreversible deamidation of specific glutamine residues to glutamic acid. The chain is Protein-glutamate methylesterase/protein-glutamine glutaminase from Pyrococcus horikoshii (strain ATCC 700860 / DSM 12428 / JCM 9974 / NBRC 100139 / OT-3).